We begin with the raw amino-acid sequence, 225 residues long: Uracil-DNA glycosylase (225 aa).

The active-site Proton acceptor is the aspartate 65.

The protein belongs to the uracil-DNA glycosylase (UDG) superfamily. UNG family.

Its subcellular location is the cytoplasm. The catalysed reaction is Hydrolyzes single-stranded DNA or mismatched double-stranded DNA and polynucleotides, releasing free uracil.. In terms of biological role, excises uracil residues from the DNA which can arise as a result of misincorporation of dUMP residues by DNA polymerase or due to deamination of cytosine. In Clostridium perfringens (strain ATCC 13124 / DSM 756 / JCM 1290 / NCIMB 6125 / NCTC 8237 / Type A), this protein is Uracil-DNA glycosylase.